The following is a 591-amino-acid chain: MINNALRTLISSATEQSLDDVLEHEFRTAVQLQQMDQFEWHQVEADLWKRTCLGHEASASFNQNIAHGHTELSLMTSWRVHQPSSSRITGSELELDQLVARVRQAWIQARYLRPEVGVELDTHTDPTVAQTMCYRLLRDEESIQEWLDETFVVKRLGDPGVATPAELCAYTYNRPLATKGKKSMLYLILPRLDDEQRTAYTIWNVSHAVTDGGSLAEVFNTLFQCVIDATPSEPYDSIYTPSAFELNVLPRMPRSVVMAYRQQYQPKPEEIAKAHKVAEVNMRMITEKMGESLALMPSTSWPERKHETVCLCRELEANEVRELLKFAKQVHSGITYLASAATILSAAETFPERKASSKGALVGMVRNARRWISATPLDASLGASTPLGSDAVFLWVPIDTHKTLEPSFSRMQELVTTARHIRHELDKHLTTPHCISSYPYVAESSIQGLNQQWSQIKAVQSPSSSSSQKEIAGIIGAQAPGFSSVGMMRIRPRFEPVSANARASGLWLERTDFTHTGRQINASPWISMFNVDGRIKLQLGFDTKFHEVEKMNQWLDRTVVWMRICAAAAATTSTSVSSTSVDATAPVFARL.

The segment at 589–591 (ARL) is peroxisomal targeting signal type 1.

This sequence belongs to the trichothecene O-acetyltransferase family.

It is found in the peroxisome. The protein operates within secondary metabolite biosynthesis. Acyl-CoA-dependent acyltransferase; part of the gene cluster that mediates the biosynthesis of mannosylerythritol lipids (MELs), surface-active substances that enhance the availability of water-insoluble substrates. Mannosylerythritol lipid production is responsible for hemolytic activity of Ustilago maydis. Depending on the number of acetyl groups, mannosylerythritol lipids can be differentiated into MEL A (fully acetylated), MEL B and MEL C (monoacetylated at R-6 and R-4, respectively), and the fully deacetylated MEL D. The first step in the pathway is the generation of mannosylerythritol by the glycosyltransferase EMT1 which catalyzes the transfer of GDP-mannose to the C-4 atom of meso-erythritol. This reaction has to be stereospecific, since only mannosyl-D-erythritol is generated. The produced disaccharide is subsequently acylated with fatty acids of various lengths derived from the peroxisomal beta-oxidation by the peroxisomal acyltransferases MAC1 and MAC2 at positions C-2 and C-3, repectively. The existence of MEL derivatives which carry an acetyl group at C-2 implies that at least MAC1 also accepts acetyl-CoA as a donor. The final step of MEL biosynthesis is the acetylation of the fully acylated mannosylerythritol lipids catalyzed by the acetyl-CoA-dependent acetyltransferase MAT1. MAT1 displays a relaxed regioselectivity and is able to transfer acetylgroups to both positions C-4 and C-6 of the mannosyl moiety. This chain is Acyl-CoA-dependent acyltransferase MAC1, found in Mycosarcoma maydis (Corn smut fungus).